A 169-amino-acid polypeptide reads, in one-letter code: Peptide deformylase (169 aa).

Fe cation-binding residues include C91 and H133. Residue E134 is part of the active site. Residue H137 coordinates Fe cation.

It belongs to the polypeptide deformylase family. It depends on Fe(2+) as a cofactor.

The catalysed reaction is N-terminal N-formyl-L-methionyl-[peptide] + H2O = N-terminal L-methionyl-[peptide] + formate. Its function is as follows. Removes the formyl group from the N-terminal Met of newly synthesized proteins. Requires at least a dipeptide for an efficient rate of reaction. N-terminal L-methionine is a prerequisite for activity but the enzyme has broad specificity at other positions. The protein is Peptide deformylase of Pectobacterium atrosepticum (strain SCRI 1043 / ATCC BAA-672) (Erwinia carotovora subsp. atroseptica).